A 303-amino-acid chain; its full sequence is UDP-3-O-acyl-N-acetylglucosamine deacetylase (303 aa).

Zn(2+) contacts are provided by H78, H237, and D241. The active-site Proton donor is the H264.

Belongs to the LpxC family. The cofactor is Zn(2+).

It carries out the reaction a UDP-3-O-[(3R)-3-hydroxyacyl]-N-acetyl-alpha-D-glucosamine + H2O = a UDP-3-O-[(3R)-3-hydroxyacyl]-alpha-D-glucosamine + acetate. Its pathway is glycolipid biosynthesis; lipid IV(A) biosynthesis; lipid IV(A) from (3R)-3-hydroxytetradecanoyl-[acyl-carrier-protein] and UDP-N-acetyl-alpha-D-glucosamine: step 2/6. In terms of biological role, catalyzes the hydrolysis of UDP-3-O-myristoyl-N-acetylglucosamine to form UDP-3-O-myristoylglucosamine and acetate, the committed step in lipid A biosynthesis. The chain is UDP-3-O-acyl-N-acetylglucosamine deacetylase from Pseudomonas aeruginosa (strain LESB58).